We begin with the raw amino-acid sequence, 135 residues long: ARGOS-like protein (135 aa).

The interval 71 to 122 (FSLESMVVLVGLTASLLILPLILPPLPPPPFMLLLIPIGIMVLLMVLAFMPS) is organ Size Related (OSR) domain. Helical transmembrane passes span 76 to 96 (MVVL…LPPL) and 100 to 120 (PFML…LAFM).

This sequence belongs to the plant organ size related (OSR) protein family. In terms of tissue distribution, expressed in cotyledons, roots, flowers, siliques and leaves.

It localises to the membrane. It is found in the nucleus. The protein localises to the cytoplasm. Its subcellular location is the endoplasmic reticulum. Functionally, promotes cell expansion-dependent organ growth, probably via a brassinosteroids signaling pathway. Acts downstream of BRI1. This chain is ARGOS-like protein (ARL), found in Arabidopsis thaliana (Mouse-ear cress).